Here is an 822-residue protein sequence, read N- to C-terminus: Dimethyl sulfoxide/trimethylamine N-oxide reductase (822 aa).

A signal peptide (tat-type signal) is located at residues 1-42 (MTKLSGQELHAELSRRAFLSYTAAVGALGLCGTSLLAQGARA). Residues W158, 158 to 160 (WKS), S189, 232 to 233 (KT), 262 to 263 (IN), 283 to 285 (QTD), 364 to 365 (WS), R368, N476, H480, 500 to 501 (QD), R523, D553, 683 to 686 (ASHP), R689, 691 to 693 (HSQ), N779, and 796 to 797 (GQ) each bind Mo-bis(molybdopterin guanine dinucleotide).

This sequence belongs to the prokaryotic molybdopterin-containing oxidoreductase family. In terms of assembly, homodimer. The cofactor is Mo-bis(molybdopterin guanine dinucleotide). Post-translationally, predicted to be exported by the Tat system. The position of the signal peptide cleavage has been experimentally proven.

The protein localises to the periplasm. It carries out the reaction dimethyl sulfide + a menaquinone + H2O = dimethyl sulfoxide + a menaquinol. The catalysed reaction is trimethylamine + 2 Fe(III)-[cytochrome c] + H2O = trimethylamine N-oxide + 2 Fe(II)-[cytochrome c] + 3 H(+). Its function is as follows. Catalyzes the reduction of dimethyl sulfoxide (DMSO) and trimethylamine N-oxide (TMAO) to dimethyl sulfide (DMS) and trimethylamine, respectively. The terminal DMSO reductase can also use various sulfoxides and N-oxide compounds as terminal electron acceptor in addition to DMSO and TMAO. In Cereibacter sphaeroides (Rhodobacter sphaeroides), this protein is Dimethyl sulfoxide/trimethylamine N-oxide reductase (dmsA).